The sequence spans 694 residues: Elongation factor G (694 aa).

Positions aspartate 9 to leucine 288 constitute a tr-type G domain. Residues alanine 18–threonine 25, aspartate 82–histidine 86, and asparagine 136–aspartate 139 contribute to the GTP site.

It belongs to the TRAFAC class translation factor GTPase superfamily. Classic translation factor GTPase family. EF-G/EF-2 subfamily.

It is found in the cytoplasm. Its function is as follows. Catalyzes the GTP-dependent ribosomal translocation step during translation elongation. During this step, the ribosome changes from the pre-translocational (PRE) to the post-translocational (POST) state as the newly formed A-site-bound peptidyl-tRNA and P-site-bound deacylated tRNA move to the P and E sites, respectively. Catalyzes the coordinated movement of the two tRNA molecules, the mRNA and conformational changes in the ribosome. The sequence is that of Elongation factor G from Chlamydia trachomatis serovar L2b (strain UCH-1/proctitis).